The sequence spans 1173 residues: Eukaryotic translation initiation factor 3 subunit A (1173 aa).

Positions 319-502 constitute a PCI domain; sequence LQRMAAHVLL…NSIYFGTDLT (184 aa). Disordered stretches follow at residues 589-613 and 836-1173; these read QNNAREEEEARRQEEESRKAKLAEQ and AAEA…PVQL. 4 stretches are compositionally biased toward basic and acidic residues: residues 836-900, 925-1011, 1028-1081, and 1090-1125; these read AAEA…RGGD, DRNE…EPDS, SRDD…DAAP, and DAPRQSDRDNRRPAGDRRDREVRGGDLRGPESRAPK. A compositionally biased stretch (gly residues) spans 1128–1142; it reads GPSGGTGTAAGGGGN. Over residues 1149–1165 the composition is skewed to basic and acidic residues; it reads PRDEPAPKRDQPQDKGK.

Belongs to the eIF-3 subunit A family. As to quaternary structure, component of the eukaryotic translation initiation factor 3 (eIF-3) complex. The eIF-3 complex interacts with pix.

Its subcellular location is the cytoplasm. In terms of biological role, RNA-binding component of the eukaryotic translation initiation factor 3 (eIF-3) complex, which is involved in protein synthesis of a specialized repertoire of mRNAs and, together with other initiation factors, stimulates binding of mRNA and methionyl-tRNAi to the 40S ribosome. The eIF-3 complex specifically targets and initiates translation of a subset of mRNAs involved in cell proliferation. The polypeptide is Eukaryotic translation initiation factor 3 subunit A (Drosophila persimilis (Fruit fly)).